We begin with the raw amino-acid sequence, 216 residues long: DNA gyrase subunit B (216 aa).

In terms of domain architecture, Toprim spans S140–I216.

The protein belongs to the type II topoisomerase GyrB family. As to quaternary structure, heterotetramer, composed of two GyrA and two GyrB chains. In the heterotetramer, GyrA contains the active site tyrosine that forms a transient covalent intermediate with DNA, while GyrB binds cofactors and catalyzes ATP hydrolysis.

The protein localises to the cytoplasm. It carries out the reaction ATP-dependent breakage, passage and rejoining of double-stranded DNA.. Functionally, a type II topoisomerase that negatively supercoils closed circular double-stranded (ds) DNA in an ATP-dependent manner to modulate DNA topology and maintain chromosomes in an underwound state. Negative supercoiling favors strand separation, and DNA replication, transcription, recombination and repair, all of which involve strand separation. Also able to catalyze the interconversion of other topological isomers of dsDNA rings, including catenanes and knotted rings. Type II topoisomerases break and join 2 DNA strands simultaneously in an ATP-dependent manner. The polypeptide is DNA gyrase subunit B (gyrB) (Acinetobacter venetianus (strain ATCC 31012 / DSM 23050 / BCRC 14357 / CCUG 45561 / CIP 110063 / KCTC 2702 / LMG 19082 / RAG-1)).